A 100-amino-acid polypeptide reads, in one-letter code: MRLTPHEQERLLISYAAELARRRRSRGLLLNHPEAIAIITDHLLEGARDGRTVAELMVSGREVLGRDDVMDGVPEMIPDVQVEATFPDGTKLVTVHHPIG.

The protein belongs to the urease gamma subunit family. Heterotrimer of UreA (gamma), UreB (beta) and UreC (alpha) subunits. Three heterotrimers associate to form the active enzyme.

The protein localises to the cytoplasm. It carries out the reaction urea + 2 H2O + H(+) = hydrogencarbonate + 2 NH4(+). It participates in nitrogen metabolism; urea degradation; CO(2) and NH(3) from urea (urease route): step 1/1. This Mycobacteroides abscessus (strain ATCC 19977 / DSM 44196 / CCUG 20993 / CIP 104536 / JCM 13569 / NCTC 13031 / TMC 1543 / L948) (Mycobacterium abscessus) protein is Urease subunit gamma.